Reading from the N-terminus, the 185-residue chain is MKGIANSLIYLSYWPSAGSFGFNTNILETNIINITVVLGILIYFGKGVLSNLLDNRKSKIYSTIQNSEELCKGARHQLEKARARLQEIEMRVDEIRANGYLQIEQEKEDLVQAASVNLKQLEDSKNETVSFEQQKVIDQVRQQVSYQALQKALTFMKNCLNTELHLRMINYNIGRLRAKRTGQFL.

The chain crosses the membrane as a helical span at residues 31–53; sequence IINITVVLGILIYFGKGVLSNLL.

This sequence belongs to the ATPase B chain family. F-type ATPases have 2 components, F(1) - the catalytic core - and F(0) - the membrane proton channel. F(1) has five subunits: alpha(3), beta(3), gamma(1), delta(1), epsilon(1). F(0) has four main subunits: a(1), b(1), b'(1) and c(10-14). The alpha and beta chains form an alternating ring which encloses part of the gamma chain. F(1) is attached to F(0) by a central stalk formed by the gamma and epsilon chains, while a peripheral stalk is formed by the delta, b and b' chains.

The protein localises to the plastid. It is found in the chloroplast thylakoid membrane. In terms of biological role, f(1)F(0) ATP synthase produces ATP from ADP in the presence of a proton or sodium gradient. F-type ATPases consist of two structural domains, F(1) containing the extramembraneous catalytic core and F(0) containing the membrane proton channel, linked together by a central stalk and a peripheral stalk. During catalysis, ATP synthesis in the catalytic domain of F(1) is coupled via a rotary mechanism of the central stalk subunits to proton translocation. Component of the F(0) channel, it forms part of the peripheral stalk, linking F(1) to F(0). This is ATP synthase subunit b, chloroplastic from Gnetum parvifolium (Small-leaved jointfir).